Reading from the N-terminus, the 261-residue chain is uncharacterized protein (261 aa).

2 consecutive transmembrane segments (helical) span residues 4 to 21 and 33 to 55; these read RLIAIATFVVTFGILIVL and FSILSILAAVLTIAAYFFTLVLF.

The protein resides in the cell membrane. This is an uncharacterized protein from Archaeoglobus fulgidus (strain ATCC 49558 / DSM 4304 / JCM 9628 / NBRC 100126 / VC-16).